Reading from the N-terminus, the 141-residue chain is Nucleoside diphosphate kinase (141 aa).

Residues Lys-11, Phe-59, Arg-87, Thr-93, Arg-104, and Asn-114 each coordinate ATP. The active-site Pros-phosphohistidine intermediate is the His-117.

This sequence belongs to the NDK family. As to quaternary structure, homotetramer. It depends on Mg(2+) as a cofactor.

It is found in the cytoplasm. The enzyme catalyses a 2'-deoxyribonucleoside 5'-diphosphate + ATP = a 2'-deoxyribonucleoside 5'-triphosphate + ADP. It carries out the reaction a ribonucleoside 5'-diphosphate + ATP = a ribonucleoside 5'-triphosphate + ADP. Functionally, major role in the synthesis of nucleoside triphosphates other than ATP. The ATP gamma phosphate is transferred to the NDP beta phosphate via a ping-pong mechanism, using a phosphorylated active-site intermediate. The polypeptide is Nucleoside diphosphate kinase (Neisseria meningitidis serogroup A / serotype 4A (strain DSM 15465 / Z2491)).